Consider the following 359-residue polypeptide: Peptide chain release factor 1 (359 aa).

Q236 carries the N5-methylglutamine modification.

Belongs to the prokaryotic/mitochondrial release factor family. Post-translationally, methylated by PrmC. Methylation increases the termination efficiency of RF1.

Its subcellular location is the cytoplasm. In terms of biological role, peptide chain release factor 1 directs the termination of translation in response to the peptide chain termination codons UAG and UAA. The polypeptide is Peptide chain release factor 1 (Streptococcus pyogenes serotype M6 (strain ATCC BAA-946 / MGAS10394)).